The chain runs to 1560 residues: Tenascin-N (1560 aa).

The first 26 residues, 1-26 (MGLWGMLAFPLGFLLASVLLVASAPA), serve as a signal peptide directing secretion. 3 EGF-like domains span residues 167–198 (DQPT…VDCA), 199–229 (YAAC…EDCS), and 230–260 (EQRC…PDCS). Intrachain disulfides connect cysteine 171-cysteine 181, cysteine 175-cysteine 186, cysteine 188-cysteine 197, cysteine 202-cysteine 212, cysteine 206-cysteine 217, cysteine 219-cysteine 228, cysteine 233-cysteine 243, cysteine 237-cysteine 248, and cysteine 250-cysteine 259. 12 Fibronectin type-III domains span residues 264–353 (APQG…DLAV), 354–444 (VGTA…TEID), 445–532 (GPTN…TEID), 533–622 (SPEN…IDSP), 623–706 (KNLV…APTD), 709–798 (GPKN…IDSP), 799–882 (KNLV…APTD), 885–970 (GPKN…APTD), 973–1062 (SPKN…IDSP), 1063–1144 (KNLV…TKAP), 1149–1238 (SPKN…IDPP), and 1239–1325 (RNLR…VDAR). Disordered regions lie at residues 868–888 (GTQE…GPKN) and 1044–1063 (GARE…DSPK). Residues 1044 to 1061 (GARESKKANTEGHTDIDS) are compositionally biased toward basic and acidic residues. The Fibrinogen C-terminal domain maps to 1323–1540 (DARFPHPSDC…YVELKIRPFG (218 aa)). Asparagine 1411 carries N-linked (GlcNAc...) asparagine glycosylation.

It belongs to the tenascin family. As to quaternary structure, homohexamer. As to expression, highest expression in kidney followed by spleen and brain. In brain, highest expression is found in hippocampus, cerebellum and olfactory bulb. Expressed in aortic valve, corneal limbus. Expressed in ribs periosteum. During a fracture repair process, expression increases in cells of newly formed perichondrium/peristeum surrounding the cartalaginous callus.

The protein localises to the secreted. Its subcellular location is the extracellular space. It localises to the extracellular matrix. In terms of biological role, extracellular matrix protein that seems to be a ligand for ITGA8:ITGB1, ITGAV:ITGB1 and ITGA4:ITGB1. Involved in neurite outgrowth and cell migration in hippocampal explants. During endochondral bone formation, inhibits proliferation and differentiation of proteoblasts mediated by canonical WNT signaling. In tumors, stimulates angiogenesis by elongation, migration and sprouting of endothelial cells. Expressed in most mammary tumors, may facilitate tumorigenesis by supporting the migratory behavior of breast cancer cells. This is Tenascin-N from Mus musculus (Mouse).